The sequence spans 981 residues: Anoctamin-3 (981 aa).

A compositionally biased stretch (polar residues) spans 1 to 22 (MVHHSGSIQSFKQQKGMNISKS). The tract at residues 1 to 33 (MVHHSGSIQSFKQQKGMNISKSEITKETSLKPS) is disordered. Residues 1–403 (MVHHSGSIQS…LYFAWLGWYT (403 aa)) are Cytoplasmic-facing. A helical transmembrane segment spans residues 404-424 (GMLIPAAIVGLCVFFYGLFTM). N425, N448, and N455 each carry an N-linked (GlcNAc...) asparagine glycan. Residues 425–469 (NNSQVSQEICKATEVFMCPLCDKNCSLQRLNDSCIYAKVTYLFDN) are Extracellular-facing. A helical transmembrane segment spans residues 470 to 490 (GGTVFFAIFMAIWATVFLEFW). At 491–550 (KRRRSILTYTWDLIEWEEEEETLRPQFEAKYYKMEIVNPITGKPEPHQPSSDKVTRLLVS) the chain is on the cytoplasmic side. The helical transmembrane segment at 551-571 (VSGIFFMISLVITAVFGVVVY) threads the bilayer. The Extracellular segment spans residues 572-592 (RLVVMEQFASFKWNFIKQYWQ). The chain crosses the membrane as a helical span at residues 593-613 (FATSAAAVCINFIIIMLLNLA). At 614–640 (YEKIAYLLTNLEYPRTESEWENSFALK) the chain is on the cytoplasmic side. Residues 641-661 (MFLFQFVNLNSSIFYIAFFLG) form a helical membrane-spanning segment. Residues 662–761 (RFVGHPGKYN…MDEYLEMVLQ (100 aa)) lie on the Extracellular side of the membrane. The chain crosses the membrane as a helical span at residues 762–782 (FGFTTIFVAAFPLAPLLALLN). Residues 783-810 (NIIEIRLDAYKFVTQWRRPLPARATDIG) are Cytoplasmic-facing. A helical membrane pass occupies residues 811-831 (IWLGILEGIGILAVITNAFVI). The Extracellular portion of the chain corresponds to 832-914 (AITSDYIPRF…QYWHILAARL (83 aa)). N866 carries an N-linked (GlcNAc...) asparagine glycan. Residues 915–935 (AFIIVFEHLVFGIKSFIAYLI) traverse the membrane as a helical segment. Topologically, residues 936 to 981 (PDVPKGLHDRIRREKYLVQEMMYEAELEHLQQQRRKSGQPVHHEWP) are cytoplasmic.

Belongs to the anoctamin family. As to quaternary structure, interacts with KCNT1/Slack. As to expression, highly expressed in the forebrain striatum.

It is found in the cell membrane. The enzyme catalyses a 1,2-diacyl-sn-glycero-3-phosphocholine(in) = a 1,2-diacyl-sn-glycero-3-phosphocholine(out). The catalysed reaction is a beta-D-galactosyl-(1&lt;-&gt;1')-N-acylsphing-4-enine(out) = a beta-D-galactosyl-(1&lt;-&gt;1')-N-acylsphing-4-enine(in). Functionally, has calcium-dependent phospholipid scramblase activity; scrambles phosphatidylcholine and galactosylceramide. Seems to act as potassium channel regulator and may inhibit pain signaling; can facilitate KCNT1/Slack channel activity by promoting its full single-channel conductance at very low sodium concentrations and by increasing its sodium sensitivity. Does not exhibit calcium-activated chloride channel (CaCC) activity. The polypeptide is Anoctamin-3 (ANO3) (Homo sapiens (Human)).